The sequence spans 332 residues: 3-dehydroquinate synthase (332 aa).

NAD(+) contacts are provided by residues 55-60 (DGEEYK), 89-93 (GVITD), 113-114 (TT), Lys126, Lys134, and 152-155 (TLST). Zn(2+)-binding residues include Glu167, His226, and His242.

This sequence belongs to the sugar phosphate cyclases superfamily. Dehydroquinate synthase family. The cofactor is NAD(+). It depends on Co(2+) as a cofactor. Requires Zn(2+) as cofactor.

The protein localises to the cytoplasm. It carries out the reaction 7-phospho-2-dehydro-3-deoxy-D-arabino-heptonate = 3-dehydroquinate + phosphate. The protein operates within metabolic intermediate biosynthesis; chorismate biosynthesis; chorismate from D-erythrose 4-phosphate and phosphoenolpyruvate: step 2/7. In terms of biological role, catalyzes the conversion of 3-deoxy-D-arabino-heptulosonate 7-phosphate (DAHP) to dehydroquinate (DHQ). In Pyrococcus abyssi (strain GE5 / Orsay), this protein is 3-dehydroquinate synthase.